A 330-amino-acid chain; its full sequence is Geranylgeranyl diphosphate synthase (330 aa).

Isopentenyl diphosphate-binding residues include K43, R46, and H75. Mg(2+)-binding residues include D82 and D86. Residue R91 coordinates an all-trans-polyprenyl diphosphate. Position 92 (R92) interacts with isopentenyl diphosphate. K175, T176, Q213, K230, and K240 together coordinate an all-trans-polyprenyl diphosphate.

Belongs to the FPP/GGPP synthase family. It depends on Mg(2+) as a cofactor.

The catalysed reaction is isopentenyl diphosphate + (2E,6E)-farnesyl diphosphate = (2E,6E,10E)-geranylgeranyl diphosphate + diphosphate. It participates in isoprenoid biosynthesis; geranylgeranyl diphosphate biosynthesis; geranylgeranyl diphosphate from farnesyl diphosphate and isopentenyl diphosphate: step 1/1. Functionally, catalyzes the condensation of isopentenyl pyrophosphate with the allylic pyrophosphates to yield geranylgeranyl diphosphate (GGPP) which is a precursor of the ether-linked lipids. It is able to use dimethylallyl diphosphate (DMAPP), geranyl diphosphate (GPP), and (all-E)-geranyl diphosphate (E-FPP) as an allylic substrate. The polypeptide is Geranylgeranyl diphosphate synthase (gds) (Sulfolobus acidocaldarius (strain ATCC 33909 / DSM 639 / JCM 8929 / NBRC 15157 / NCIMB 11770)).